The sequence spans 300 residues: Small ribosomal subunit biogenesis GTPase RsgA (300 aa).

Residues 69–231 (RSDEMRVKQF…LIDSPGFQAF (163 aa)) enclose the CP-type G domain. Residues 119-122 (NKID) and 172-180 (GQSGMGKST) contribute to the GTP site. 4 residues coordinate Zn(2+): Cys255, Cys260, His262, and Cys268.

Belongs to the TRAFAC class YlqF/YawG GTPase family. RsgA subfamily. As to quaternary structure, monomer. Associates with 30S ribosomal subunit, binds 16S rRNA. Zn(2+) serves as cofactor.

It is found in the cytoplasm. Its function is as follows. One of several proteins that assist in the late maturation steps of the functional core of the 30S ribosomal subunit. Helps release RbfA from mature subunits. May play a role in the assembly of ribosomal proteins into the subunit. Circularly permuted GTPase that catalyzes slow GTP hydrolysis, GTPase activity is stimulated by the 30S ribosomal subunit. In Bordetella bronchiseptica (strain ATCC BAA-588 / NCTC 13252 / RB50) (Alcaligenes bronchisepticus), this protein is Small ribosomal subunit biogenesis GTPase RsgA.